Reading from the N-terminus, the 940-residue chain is Gamma-aminobutyric acid type B receptor subunit 2 (940 aa).

The N-terminal stretch at 1–40 (MASPPSSGQPRPPPPPPPPARLLLPLLLSLLLWLAPGAWG) is a signal peptide. Topologically, residues 41 to 482 (WTRGAPRPPP…LRKISLPLYS (442 aa)) are extracellular. Residue asparagine 89 is glycosylated (N-linked (GlcNAc...) asparagine). Intrachain disulfides connect cysteine 107–cysteine 134, cysteine 236–cysteine 265, and cysteine 264–cysteine 301. 4 N-linked (GlcNAc...) asparagine glycosylation sites follow: asparagine 297, asparagine 388, asparagine 403, and asparagine 452. A helical transmembrane segment spans residues 483-503 (ILSALTILGMIMASAFLFFNI). Topologically, residues 504-521 (KNRNQKLIKMSSPYMNNL) are cytoplasmic. The helical transmembrane segment at 522–542 (IILGGMLSYASIFLFGLDGSF) threads the bilayer. Topologically, residues 543–550 (VSEKTFET) are extracellular. The chain crosses the membrane as a helical span at residues 551–571 (LCTVRTWILTVGYTTAFGAMF). The Cytoplasmic portion of the chain corresponds to 572–596 (AKTWRVHAIFKNVKMKKKIIKDQKL). The helical transmembrane segment at 597–617 (LVIVGGMLLIDLCILICWQAV) threads the bilayer. Residues 618 to 653 (DPLRRTVERYSMEPDPAGRDISIRPLLEHCENTHMT) lie on the Extracellular side of the membrane. A helical transmembrane segment spans residues 654–674 (IWLGIVYAYKGLLMLFGCFLA). Residues 675-690 (WETRNVSIPALNDSKY) lie on the Cytoplasmic side of the membrane. A helical transmembrane segment spans residues 691–711 (IGMSVYNVGIMCIIGAAVSFL). At 712–719 (TRDQPNVQ) the chain is on the extracellular side. A helical transmembrane segment spans residues 720-740 (FCIVALVIIFCSTITLCLVFV). Residues 741-940 (PKLITLRTNP…PSFRVMVSGL (200 aa)) lie on the Cytoplasmic side of the membrane. The tract at residues 762–789 (TQNQKKEDSKTSTSVTSVNQASTSRLEG) is disordered. Residues 772–786 (TSTSVTSVNQASTSR) are compositionally biased toward polar residues. Phosphoserine is present on residues serine 775 and serine 778. Residues 780-818 (NQASTSRLEGLQSENHRLRMKITELDKDLEEVTMQLQDT) adopt a coiled-coil conformation. A Phosphothreonine modification is found at threonine 818. Serine 883, serine 892, serine 912, serine 915, serine 919, and serine 923 each carry phosphoserine.

This sequence belongs to the G-protein coupled receptor 3 family. GABA-B receptor subfamily. In terms of assembly, heterodimer of GABBR1 and GABBR2. Homodimers may form, but are inactive. Interacts (via C-terminus) with ATF4 (via leucine zipper domain). Interacts with KCTD8, KCTD12 and KCTD16; this interaction determines the pharmacology and kinetics of the receptor response, the KCTD proteins markedly accelerating the GABA-B response, although to different extents. Highly expressed in areas of the brain including thalamic nuclei, the hippocampus, cerebellar Purkinje cells and the medial habenula, and moderately expressed in the cerebral cortex, certain anterioventral thalamic nuclei, dorsal medial hypothalamic nucleus and suprachiasmatic nuclei. Also weakly expressed in the testis.

It is found in the cell membrane. It localises to the postsynaptic cell membrane. The protein localises to the perikaryon. The protein resides in the cell projection. Its subcellular location is the dendrite. Its function is as follows. Component of a heterodimeric G-protein coupled receptor for GABA, formed by GABBR1 and GABBR2. Within the heterodimeric GABA receptor, only GABBR1 seems to bind agonists, while GABBR2 mediates coupling to G proteins. Ligand binding causes a conformation change that triggers signaling via guanine nucleotide-binding proteins (G proteins) and modulates the activity of down-stream effectors, such as adenylate cyclase. Signaling inhibits adenylate cyclase, stimulates phospholipase A2, activates potassium channels, inactivates voltage-dependent calcium-channels and modulates inositol phospholipid hydrolysis. Plays a critical role in the fine-tuning of inhibitory synaptic transmission. Pre-synaptic GABA receptor inhibits neurotransmitter release by down-regulating high-voltage activated calcium channels, whereas postsynaptic GABA receptor decreases neuronal excitability by activating a prominent inwardly rectifying potassium (Kir) conductance that underlies the late inhibitory postsynaptic potentials. Not only implicated in synaptic inhibition but also in hippocampal long-term potentiation, slow wave sleep, muscle relaxation and antinociception. The polypeptide is Gamma-aminobutyric acid type B receptor subunit 2 (Gabbr2) (Rattus norvegicus (Rat)).